Here is a 343-residue protein sequence, read N- to C-terminus: Multidrug resistance protein MdtN (343 aa).

The Cytoplasmic segment spans residues 1-12; sequence MESTPKKAPRSK. The helical; Signal-anchor for type II membrane protein transmembrane segment at 13–33 threads the bilayer; the sequence is FPALLVVALALVALVFVIWRV. Residues 34 to 343 are Periplasmic-facing; that stretch reads DSAPSTNDAY…ASAVANLEPQ (310 aa).

This sequence belongs to the membrane fusion protein (MFP) (TC 8.A.1) family. As to quaternary structure, could be part of a tripartite efflux system composed of MdtN, MdtO and MdtP.

It is found in the cell inner membrane. In terms of biological role, could be involved in resistance to puromycin, acriflavine and tetraphenylarsonium chloride. The sequence is that of Multidrug resistance protein MdtN (mdtN) from Shigella flexneri.